Reading from the N-terminus, the 287-residue chain is 3-methyl-2-oxobutanoate hydroxymethyltransferase (287 aa).

2 residues coordinate Mg(2+): Asp-67 and Asp-106. 3-methyl-2-oxobutanoate contacts are provided by residues 67–68 (DS), Asp-106, and Lys-136. A Mg(2+)-binding site is contributed by Glu-138. The Proton acceptor role is filled by Glu-204.

This sequence belongs to the PanB family. In terms of assembly, homodecamer; pentamer of dimers. Mg(2+) serves as cofactor.

It is found in the cytoplasm. The catalysed reaction is 3-methyl-2-oxobutanoate + (6R)-5,10-methylene-5,6,7,8-tetrahydrofolate + H2O = 2-dehydropantoate + (6S)-5,6,7,8-tetrahydrofolate. The protein operates within cofactor biosynthesis; (R)-pantothenate biosynthesis; (R)-pantoate from 3-methyl-2-oxobutanoate: step 1/2. Functionally, catalyzes the reversible reaction in which hydroxymethyl group from 5,10-methylenetetrahydrofolate is transferred onto alpha-ketoisovalerate to form ketopantoate. This Streptomyces avermitilis (strain ATCC 31267 / DSM 46492 / JCM 5070 / NBRC 14893 / NCIMB 12804 / NRRL 8165 / MA-4680) protein is 3-methyl-2-oxobutanoate hydroxymethyltransferase.